We begin with the raw amino-acid sequence, 968 residues long: RNA polymerase-associated protein RapA (968 aa).

Positions 163–332 (EVGRRYAPRV…FARLRLLDPD (170 aa)) constitute a Helicase ATP-binding domain. Residue 176–183 (DEVGLGKT) coordinates ATP. The DEAH box signature appears at 278 to 281 (DEAH). The Helicase C-terminal domain occupies 491-655 (RVDWLIEFLK…EFAEDLLNVL (165 aa)).

It belongs to the SNF2/RAD54 helicase family. RapA subfamily. In terms of assembly, interacts with the RNAP. Has a higher affinity for the core RNAP than for the holoenzyme. Its ATPase activity is stimulated by binding to RNAP.

Its function is as follows. Transcription regulator that activates transcription by stimulating RNA polymerase (RNAP) recycling in case of stress conditions such as supercoiled DNA or high salt concentrations. Probably acts by releasing the RNAP, when it is trapped or immobilized on tightly supercoiled DNA. Does not activate transcription on linear DNA. Probably not involved in DNA repair. This chain is RNA polymerase-associated protein RapA, found in Shewanella baltica (strain OS155 / ATCC BAA-1091).